A 66-amino-acid polypeptide reads, in one-letter code: Translational regulator CsrA (66 aa).

The protein belongs to the CsrA/RsmA family. As to quaternary structure, homodimer; the beta-strands of each monomer intercalate to form a hydrophobic core, while the alpha-helices form wings that extend away from the core.

The protein localises to the cytoplasm. Its function is as follows. A key translational regulator that binds mRNA to regulate translation initiation and/or mRNA stability. Mediates global changes in gene expression, shifting from rapid growth to stress survival by linking envelope stress, the stringent response and the catabolite repression systems. Usually binds in the 5'-UTR; binding at or near the Shine-Dalgarno sequence prevents ribosome-binding, repressing translation, binding elsewhere in the 5'-UTR can activate translation and/or stabilize the mRNA. Its function is antagonized by small RNA(s). This chain is Translational regulator CsrA, found in Alkalilimnicola ehrlichii (strain ATCC BAA-1101 / DSM 17681 / MLHE-1).